Reading from the N-terminus, the 78-residue chain is DNA-directed RNA polymerase subunit Rpo5 (78 aa).

This sequence belongs to the archaeal Rpo5/eukaryotic RPB5 RNA polymerase subunit family. Part of the RNA polymerase complex.

It localises to the cytoplasm. It catalyses the reaction RNA(n) + a ribonucleoside 5'-triphosphate = RNA(n+1) + diphosphate. DNA-dependent RNA polymerase (RNAP) catalyzes the transcription of DNA into RNA using the four ribonucleoside triphosphates as substrates. This Methanococcoides burtonii (strain DSM 6242 / NBRC 107633 / OCM 468 / ACE-M) protein is DNA-directed RNA polymerase subunit Rpo5.